The chain runs to 372 residues: Glutamate 5-kinase (372 aa).

ATP is bound at residue lysine 14. Residues serine 54, aspartate 141, and asparagine 153 each contribute to the substrate site. 173–174 contacts ATP; that stretch reads TD. The 79-residue stretch at 280 to 358 folds into the PUA domain; it reads RGTLVLDAGA…DAIEKLLGYV (79 aa).

The protein belongs to the glutamate 5-kinase family.

The protein localises to the cytoplasm. It catalyses the reaction L-glutamate + ATP = L-glutamyl 5-phosphate + ADP. Its pathway is amino-acid biosynthesis; L-proline biosynthesis; L-glutamate 5-semialdehyde from L-glutamate: step 1/2. Its function is as follows. Catalyzes the transfer of a phosphate group to glutamate to form L-glutamate 5-phosphate. This Ectopseudomonas mendocina (strain ymp) (Pseudomonas mendocina) protein is Glutamate 5-kinase.